Reading from the N-terminus, the 372-residue chain is NAD(P)H-quinone oxidoreductase subunit 1 (372 aa).

8 helical membrane passes run 27–47 (LLWL…GVLV), 97–117 (LLFT…WLII), 128–148 (VGIG…GLLM), 176–196 (LALA…IDIV), 204–224 (FLSW…ICAL), 270–290 (LLVS…ELIA), 308–328 (SLGI…AILL), and 351–371 (ISLV…FAFG).

The protein belongs to the complex I subunit 1 family. As to quaternary structure, NDH-1 is composed of at least 11 different subunits.

Its subcellular location is the cellular thylakoid membrane. It carries out the reaction a plastoquinone + NADH + (n+1) H(+)(in) = a plastoquinol + NAD(+) + n H(+)(out). The enzyme catalyses a plastoquinone + NADPH + (n+1) H(+)(in) = a plastoquinol + NADP(+) + n H(+)(out). Its function is as follows. NDH-1 shuttles electrons from an unknown electron donor, via FMN and iron-sulfur (Fe-S) centers, to quinones in the respiratory and/or the photosynthetic chain. The immediate electron acceptor for the enzyme in this species is believed to be plastoquinone. Couples the redox reaction to proton translocation, and thus conserves the redox energy in a proton gradient. This Prochlorococcus marinus (strain SARG / CCMP1375 / SS120) protein is NAD(P)H-quinone oxidoreductase subunit 1.